The following is a 349-amino-acid chain: UDP-N-acetylenolpyruvoylglucosamine reductase (349 aa).

Residues 24–197 form the FAD-binding PCMH-type domain; it reads FGIDATARFA…VAVTFRLPKR (174 aa). Arginine 173 is a catalytic residue. The active-site Proton donor is serine 249. Glutamate 345 is a catalytic residue.

Belongs to the MurB family. It depends on FAD as a cofactor.

Its subcellular location is the cytoplasm. It carries out the reaction UDP-N-acetyl-alpha-D-muramate + NADP(+) = UDP-N-acetyl-3-O-(1-carboxyvinyl)-alpha-D-glucosamine + NADPH + H(+). The protein operates within cell wall biogenesis; peptidoglycan biosynthesis. Functionally, cell wall formation. The protein is UDP-N-acetylenolpyruvoylglucosamine reductase of Burkholderia ambifaria (strain ATCC BAA-244 / DSM 16087 / CCUG 44356 / LMG 19182 / AMMD) (Burkholderia cepacia (strain AMMD)).